We begin with the raw amino-acid sequence, 328 residues long: Phosphate acyltransferase (328 aa).

This sequence belongs to the PlsX family. As to quaternary structure, homodimer. Probably interacts with PlsY.

It localises to the cytoplasm. The catalysed reaction is a fatty acyl-[ACP] + phosphate = an acyl phosphate + holo-[ACP]. Its pathway is lipid metabolism; phospholipid metabolism. Catalyzes the reversible formation of acyl-phosphate (acyl-PO(4)) from acyl-[acyl-carrier-protein] (acyl-ACP). This enzyme utilizes acyl-ACP as fatty acyl donor, but not acyl-CoA. This is Phosphate acyltransferase from Staphylococcus aureus (strain MRSA252).